The sequence spans 409 residues: MFVQEEKIFAGKVLRLHICAADGSEWLEEATEDTSVEKLKESCLKHGAHGSLEDPKNVTHHKLIHAASERVLSDSKTILEENIQDQDVLLLIKKRAPSPIPKMADVSAEEKKKQEQKAPDKDAILRATANLPACSTDRTAVQTTMRDFQTELRKILVSLIEVAQKLLALNPDAVELFKKANAMLDEDEDERVDETALRQLTEMGFPESRASKALRLNHMSVPQAMEWLIEHSEDPAIDTPLPGHAAQAEASAAAATSSSSSEAAVGTSVEDEESRDELTEIFKKIRRKKEFRADARAVISLMEMGFDEKEVIDALRVNNNQQNAACEWLLGDRKPSPEELDQGIDPNSPLFQAILDNPVVQLGLTNPKTLLAFEDMLENPLNSTQWMNDPETGPVMLQISRIFQTLNRT.

Residue methionine 1 is modified to N-acetylmethionine. The Ubiquitin-like domain maps to 14-98 (LRLHICAADG…LLLIKKRAPS (85 aa)). Residues 187 to 231 (DEDERVDETALRQLTEMGFPESRASKALRLNHMSVPQAMEWLIEH) enclose the UBA 1 domain. The disordered stretch occupies residues 235-273 (PAIDTPLPGHAAQAEASAAAATSSSSSEAAVGTSVEDEE). The segment covering 245–264 (AAQAEASAAAATSSSSSEAA) has biased composition (low complexity). The 41-residue stretch at 292-332 (RADARAVISLMEMGFDEKEVIDALRVNNNQQNAACEWLLGD) folds into the UBA 2 domain. One can recognise an STI1 domain in the interval 357–396 (NPVVQLGLTNPKTLLAFEDMLENPLNSTQWMNDPETGPVM).

In terms of assembly, component of the KPC complex composed of RNF123/KPC1 and UBAC1/KPC2. Interacts (via ubiquitin-like domain) with RNF123. Interacts (via ubiquitin-like and UBA domains) with the proteasome via its N-terminal domain.

The protein resides in the cytoplasm. Its pathway is protein modification; protein ubiquitination. Its function is as follows. Non-catalytic component of the KPC complex, a E3 ubiquitin-protein ligase complex that mediates polyubiquitination of target proteins, such as CDKN1B and NFKB1. The KPC complex catalyzes polyubiquitination and proteasome-mediated degradation of CDKN1B during G1 phase of the cell cycle. The KPC complex also acts as a key regulator of the NF-kappa-B signaling by promoting maturation of the NFKB1 component of NF-kappa-B by catalyzing ubiquitination of the NFKB1 p105 precursor. Within the KPC complex, UBAC1 acts as an adapter that promotes the transfer of target proteins that have been polyubiquitinated by RNF123/KPC1 to the 26S proteasome. The polypeptide is Ubiquitin-associated domain-containing protein 1 (Ubac1) (Rattus norvegicus (Rat)).